Consider the following 116-residue polypeptide: Nitrogenase-stabilizing/protective protein NifW (116 aa).

Belongs to the NifW family. As to quaternary structure, homotrimer; associates with NifD.

May protect the nitrogenase Fe-Mo protein from oxidative damage. The sequence is that of Nitrogenase-stabilizing/protective protein NifW from Rhodopseudomonas palustris (strain TIE-1).